A 327-amino-acid polypeptide reads, in one-letter code: Phenylalanine--tRNA ligase alpha subunit (327 aa).

Glutamate 252 lines the Mg(2+) pocket.

Belongs to the class-II aminoacyl-tRNA synthetase family. Phe-tRNA synthetase alpha subunit type 1 subfamily. In terms of assembly, tetramer of two alpha and two beta subunits. The cofactor is Mg(2+).

The protein localises to the cytoplasm. The catalysed reaction is tRNA(Phe) + L-phenylalanine + ATP = L-phenylalanyl-tRNA(Phe) + AMP + diphosphate + H(+). This Vibrio parahaemolyticus serotype O3:K6 (strain RIMD 2210633) protein is Phenylalanine--tRNA ligase alpha subunit.